The chain runs to 346 residues: Phenylalanine--tRNA ligase alpha subunit (346 aa).

Glu258 lines the Mg(2+) pocket.

Belongs to the class-II aminoacyl-tRNA synthetase family. Phe-tRNA synthetase alpha subunit type 1 subfamily. Tetramer of two alpha and two beta subunits. The cofactor is Mg(2+).

It localises to the cytoplasm. It carries out the reaction tRNA(Phe) + L-phenylalanine + ATP = L-phenylalanyl-tRNA(Phe) + AMP + diphosphate + H(+). This is Phenylalanine--tRNA ligase alpha subunit from Protochlamydia amoebophila (strain UWE25).